The sequence spans 307 residues: tRNA dimethylallyltransferase (307 aa).

Position 16–23 (16–23 (GCTAVGKT)) interacts with ATP. 18–23 (TAVGKT) contacts substrate. Positions 41-44 (DSLL) are interaction with substrate tRNA.

It belongs to the IPP transferase family. Monomer. Requires Mg(2+) as cofactor.

It carries out the reaction adenosine(37) in tRNA + dimethylallyl diphosphate = N(6)-dimethylallyladenosine(37) in tRNA + diphosphate. Catalyzes the transfer of a dimethylallyl group onto the adenine at position 37 in tRNAs that read codons beginning with uridine, leading to the formation of N6-(dimethylallyl)adenosine (i(6)A). In Opitutus terrae (strain DSM 11246 / JCM 15787 / PB90-1), this protein is tRNA dimethylallyltransferase.